The primary structure comprises 786 residues: Exo-beta-D-glucosaminidase (786 aa).

Substrate-binding positions include Tyr-53, 102 to 103 (GE), 178 to 179 (DE), Glu-306, Glu-347, and Tyr-379. Residue Glu-179 is the Proton donor of the active site. Glu-347 functions as the Nucleophile in the catalytic mechanism.

This sequence belongs to the glycosyl hydrolase 35 family. As to quaternary structure, homodimer.

It is found in the cytoplasm. The catalysed reaction is beta-D-glucosaminyl-(1-&gt;4)-N-acetyl-D-glucosamine + H2O = D-glucosamine + N-acetyl-D-glucosamine. The protein operates within glycan degradation; chitin degradation. In terms of biological role, exo-type enzyme that specifically cleaves the non-reducing terminal glycosidic bond of chitooligosaccharides. Catalyzes the hydrolysis of GlcN-GlcNAc to glucosamine (GlcN) and N-acetylglucosamine (GlcNAc). Involved in chitin degradation. Can also hydrolyze reduced chitobiose (GlcN2OH) and chitooligosaccharides of various chain lengths. The polypeptide is Exo-beta-D-glucosaminidase (Thermococcus kodakarensis (strain ATCC BAA-918 / JCM 12380 / KOD1) (Pyrococcus kodakaraensis (strain KOD1))).